Reading from the N-terminus, the 469-residue chain is Ribulose bisphosphate carboxylase large chain (469 aa).

Residue K5 is modified to N6,N6,N6-trimethyllysine. 2 residues coordinate substrate: N114 and T164. K166 (proton acceptor) is an active-site residue. K168 serves as a coordination point for substrate. Mg(2+) is bound by residues K192, D194, and E195. Residue K192 is modified to N6-carboxylysine. The Proton acceptor role is filled by H285. Residues R286, H318, and S370 each contribute to the substrate site.

Belongs to the RuBisCO large chain family. Type I subfamily. Heterohexadecamer of 8 large chains and 8 small chains; disulfide-linked. The disulfide link is formed within the large subunit homodimers. Mg(2+) is required as a cofactor. Post-translationally, the disulfide bond which can form in the large chain dimeric partners within the hexadecamer appears to be associated with oxidative stress and protein turnover.

The protein resides in the plastid. It localises to the chloroplast. It catalyses the reaction 2 (2R)-3-phosphoglycerate + 2 H(+) = D-ribulose 1,5-bisphosphate + CO2 + H2O. The catalysed reaction is D-ribulose 1,5-bisphosphate + O2 = 2-phosphoglycolate + (2R)-3-phosphoglycerate + 2 H(+). Functionally, ruBisCO catalyzes two reactions: the carboxylation of D-ribulose 1,5-bisphosphate, the primary event in carbon dioxide fixation, as well as the oxidative fragmentation of the pentose substrate in the photorespiration process. Both reactions occur simultaneously and in competition at the same active site. The chain is Ribulose bisphosphate carboxylase large chain from Cephalanthus occidentalis (Common buttonbush).